The sequence spans 244 residues: NAD(P)H-quinone oxidoreductase subunit K (244 aa).

The [4Fe-4S] cluster site is built by Cys-60, Cys-61, Cys-125, and Cys-156. Positions 213–244 (KSEKSIESSKLNPVEESSENIYETNSIDEVIK) are disordered. Polar residues predominate over residues 231–244 (ENIYETNSIDEVIK).

This sequence belongs to the complex I 20 kDa subunit family. NDH-1 can be composed of about 15 different subunits; different subcomplexes with different compositions have been identified which probably have different functions. It depends on [4Fe-4S] cluster as a cofactor.

The protein localises to the cellular thylakoid membrane. It catalyses the reaction a plastoquinone + NADH + (n+1) H(+)(in) = a plastoquinol + NAD(+) + n H(+)(out). It carries out the reaction a plastoquinone + NADPH + (n+1) H(+)(in) = a plastoquinol + NADP(+) + n H(+)(out). NDH-1 shuttles electrons from an unknown electron donor, via FMN and iron-sulfur (Fe-S) centers, to quinones in the respiratory and/or the photosynthetic chain. The immediate electron acceptor for the enzyme in this species is believed to be plastoquinone. Couples the redox reaction to proton translocation, and thus conserves the redox energy in a proton gradient. Cyanobacterial NDH-1 also plays a role in inorganic carbon-concentration. The protein is NAD(P)H-quinone oxidoreductase subunit K of Prochlorococcus marinus subsp. pastoris (strain CCMP1986 / NIES-2087 / MED4).